Here is a 467-residue protein sequence, read N- to C-terminus: MQQAQGLKRGLSARHIRFMALGSAIGTGLFYGSASAIQMAGPAVLLAYLIGGAAVFMVMRALGEMAVHNPVAGSFGHYATTYLGPMAGFILGWTYAFEMVIVAIADVTAFGIYMGFWFPEVARWIWVLGIVFLIGGLNLCNVKVFGEMEFWLSLLKVGAIVAMILAGLGIMAFGFSQVGTGHAVGMSNLFDHGGFMPNGVGGLIASFAVVMFAFGGIEIIGVTAGEAKDPQRVIPKAINAVPLRILLFYVLTLFVLMCLYPWPQIGSQGSPFVQIFSNLGIGSAAAVLNVVVISAAISAINSDIFGAGRMMYGLAQQGHAPRGFSKLSKHGVPWMTVVVMGAALLIGVLLNYLIPENVFLLIASIATFATVWVWLMILLTQVAMRRSMSREQVAQLKFPVPFWPYGPAMAIAFMVFIFGVLGYFPDTQAALIVGVIWVVFLVASYLLWCKPRAGQGQPVAEPAELHR.

Helical transmembrane passes span 18 to 38 (FMAL…SAIQ), 39 to 59 (MAGP…FMVM), 71 to 91 (VAGS…GFIL), 99 to 119 (MVIV…FWFP), 125 to 145 (IWVL…VKVF), 155 to 175 (LKVG…AFGF), 200 to 220 (VGGL…IEII), 245 to 265 (ILLF…WPQI), 280 to 300 (GIGS…ISAI), 334 to 354 (WMTV…NYLI), 358 to 378 (VFLL…LMIL), 402 to 422 (FWPY…GVLG), and 429 to 449 (AALI…LLWC).

It belongs to the amino acid-polyamine-organocation (APC) superfamily. Amino acid transporter (AAT) (TC 2.A.3.1) family.

It localises to the cell inner membrane. The enzyme catalyses L-histidine(out) + n H(+)(out) = L-histidine(in) + n H(+)(in). With respect to regulation, transport activity is inhibited by the proton ionophores carbonyl cyanide m-chlorophenyl hydrazine (CCCP) and 2,4-dinitrophenol (DNP), but not by valinomycin, nigericin and nonactin. Uptake is reduced in the presence of the sulfhydryl reagent N-ethylmaleimide (NEM). Uptake is not affected by arginine, lysine, proline or compounds structurally related to histidine such as imidazole, 3-amino-1,2,4-triazole and urocanate. Only 1,2,4-triazolyl-3-alanine reduces the rate of L-histidine uptake significantly. In terms of biological role, major high-affinity histidine transporter. Binds and catalyzes the uptake of histidine into the cell. Functions as an histidine:proton symporter with high specificity for histidine. The protein is L-histidine transporter HutT of Pseudomonas putida (strain ATCC 47054 / DSM 6125 / CFBP 8728 / NCIMB 11950 / KT2440).